A 322-amino-acid chain; its full sequence is Ribosomal RNA small subunit methyltransferase H (322 aa).

Residues 34–36, aspartate 59, phenylalanine 86, aspartate 112, and glutamine 119 contribute to the S-adenosyl-L-methionine site; that span reads GGH.

The protein belongs to the methyltransferase superfamily. RsmH family.

The protein resides in the cytoplasm. The catalysed reaction is cytidine(1402) in 16S rRNA + S-adenosyl-L-methionine = N(4)-methylcytidine(1402) in 16S rRNA + S-adenosyl-L-homocysteine + H(+). Specifically methylates the N4 position of cytidine in position 1402 (C1402) of 16S rRNA. This is Ribosomal RNA small subunit methyltransferase H from Chlorobium limicola (strain DSM 245 / NBRC 103803 / 6330).